The primary structure comprises 968 residues: Phosphoenolpyruvate carboxylase 3 (968 aa).

A Phosphoserine modification is found at Ser-11. Catalysis depends on residues His-173 and Lys-603. Residue Ser-705 is modified to Phosphoserine.

It belongs to the PEPCase type 1 family. Homotetramer. Mg(2+) serves as cofactor. Expressed in roots and siliques, and to a lower extent in stems, leaves and flowers.

Its subcellular location is the cytoplasm. The enzyme catalyses oxaloacetate + phosphate = phosphoenolpyruvate + hydrogencarbonate. With respect to regulation, by light-reversible phosphorylation. In terms of biological role, through the carboxylation of phosphoenolpyruvate (PEP) it forms oxaloacetate, a four-carbon dicarboxylic acid source for the tricarboxylic acid cycle. This chain is Phosphoenolpyruvate carboxylase 3 (PPC3), found in Arabidopsis thaliana (Mouse-ear cress).